Here is a 337-residue protein sequence, read N- to C-terminus: MRVLGIETSCDETGIAIYDDEKGLLANQLYSQVKLHADYGGVVPELASRDHVRKTVPLIQAALKESGLTAKDIDAVAYTAGPGLVGALLVGATVGRSLAFAWNVPAIPVHHMEGHLLAPMLEDNPPEFPFVALLVSGGHTQLISVTGIGQYELLGESIDDAAGEAFDKTAKLLGLDYPGGPLLSKMAAQGTAGRFVFPRPMTDRPGLDFSFSGLKTFAANTIRDNGTDDQTRADIARAFEDAVVDTLMIKCKRALDLTGFKRLVMAGGVSANRTLRAKLAEMMKKRRGEVFYARPEFCTDNGAMIAYAGMVRFKAGATADLGVSVRPRWPLAELPAA.

Fe cation contacts are provided by H111 and H115. Substrate contacts are provided by residues 134 to 138 (LVSGG), D167, G180, and N272. D300 contributes to the Fe cation binding site.

It belongs to the KAE1 / TsaD family. Requires Fe(2+) as cofactor.

Its subcellular location is the cytoplasm. It catalyses the reaction L-threonylcarbamoyladenylate + adenosine(37) in tRNA = N(6)-L-threonylcarbamoyladenosine(37) in tRNA + AMP + H(+). Its function is as follows. Required for the formation of a threonylcarbamoyl group on adenosine at position 37 (t(6)A37) in tRNAs that read codons beginning with adenine. Is involved in the transfer of the threonylcarbamoyl moiety of threonylcarbamoyl-AMP (TC-AMP) to the N6 group of A37, together with TsaE and TsaB. TsaD likely plays a direct catalytic role in this reaction. This chain is tRNA N6-adenosine threonylcarbamoyltransferase, found in Escherichia coli O157:H7.